The following is a 172-amino-acid chain: MMDAVRARIRDVPDFPKKGIVFKDITPVLSDPHTFREVIDAFVGRWKGERVDKVIGIESRGFIFAAPIAYALGAGFTIVRKPGKLPWETIREVYALEYGEGALELHIDAIGPGDRVLVVDDVLATGGTAGAAGRLVARQGAELLGYSFLAELSFLNGARQLGHAKVHSLLTF.

This sequence belongs to the purine/pyrimidine phosphoribosyltransferase family. In terms of assembly, homodimer.

Its subcellular location is the cytoplasm. The enzyme catalyses AMP + diphosphate = 5-phospho-alpha-D-ribose 1-diphosphate + adenine. Its pathway is purine metabolism; AMP biosynthesis via salvage pathway; AMP from adenine: step 1/1. In terms of biological role, catalyzes a salvage reaction resulting in the formation of AMP, that is energically less costly than de novo synthesis. The polypeptide is Adenine phosphoribosyltransferase (Anaeromyxobacter dehalogenans (strain 2CP-C)).